The primary structure comprises 204 residues: Bombinin-like peptides 1 (204 aa).

The segment at residues 1 to 16 (MNFKYIVAVSILIASA) is a signal peptide (or 18). Asparagine amide occurs at positions 70 and 133.

The protein belongs to the bombinin family. In terms of tissue distribution, expressed by the skin glands.

The protein resides in the secreted. Its function is as follows. Has antimicrobial activity, but no hemolytic activity. Preference on killing Gram-negative non-enteric bacteria. This chain is Bombinin-like peptides 1, found in Bombina orientalis (Oriental fire-bellied toad).